Here is a 382-residue protein sequence, read N- to C-terminus: ORC1-type DNA replication protein 1 (382 aa).

ATP contacts are provided by residues 63–67, Tyr-205, and Arg-217; that span reads TGKTA.

The protein belongs to the CDC6/cdc18 family. In terms of assembly, monomer. Interacts with MCM via the WH domain. Autophosphorylated on a serine. Phosphorylation is stimulated by binding to MCM. Both single-stranded DNA and double-stranded DNA inhibit the phosphorylation reaction.

In terms of biological role, involved in regulation of DNA replication. May play an essential role in origin recognition. Binds to DNA, with a preference for origin-specific double-stranded sequences. Does not bind single-stranded DNA. Inhibits MCM helicase activity but does not affect its oligomeric state. This Methanothermobacter thermautotrophicus (strain ATCC 29096 / DSM 1053 / JCM 10044 / NBRC 100330 / Delta H) (Methanobacterium thermoautotrophicum) protein is ORC1-type DNA replication protein 1 (cdc6-1).